The following is a 164-amino-acid chain: Protein-export protein SecB (164 aa).

This sequence belongs to the SecB family. Homotetramer, a dimer of dimers. One homotetramer interacts with 1 SecA dimer.

The protein localises to the cytoplasm. Functionally, one of the proteins required for the normal export of preproteins out of the cell cytoplasm. It is a molecular chaperone that binds to a subset of precursor proteins, maintaining them in a translocation-competent state. It also specifically binds to its receptor SecA. The chain is Protein-export protein SecB from Burkholderia orbicola (strain MC0-3).